A 64-amino-acid chain; its full sequence is uncharacterized protein (64 aa).

Residues 1–14 show a composition bias toward polar residues; sequence MFNFDPTDQPTDQH. Residues 1–42 are disordered; the sequence is MFNFDPTDQPTDQHLLQLPTDPHPLQQPIDPHPPPQPNNNLP.

This is an uncharacterized protein from Dictyostelium discoideum (Social amoeba).